We begin with the raw amino-acid sequence, 285 residues long: Phospholipid phosphatase 1 (285 aa).

Residues 1–6 (MFDKTR) are Cytoplasmic-facing. The PDZ-binding; involved in localization to the apical cell membrane motif lies at 5 to 7 (TRL). The chain crosses the membrane as a helical span at residues 7-27 (LPYVALDVLCVLLAGLPFAIL). Over 28–53 (TSRHTPFQRGLFCNDESIKYPYKEDT) the chain is Extracellular. Residues 54–74 (IPYPLLGGIIIPFSIIVMIVG) form a helical membrane-spanning segment. Residues 75–94 (ETLSVYFNLLHSNSFIRNNY) are Cytoplasmic-facing. A helical membrane pass occupies residues 95–115 (IATIYKAIGTFLFGAAASQSL). The Extracellular segment spans residues 116-164 (TDIAKYSIGRLRPHFLDVCDPDWSKINCSDGYIENYICRGNAQKVKEGR). Positions 120 to 128 (KYSIGRLRP) are phosphatase sequence motif I. A glycan (N-linked (GlcNAc...) asparagine) is linked at asparagine 142. Residues 165–185 (LSFYSGHSSFSMYCMLFVALY) form a helical membrane-spanning segment. Residues 168-171 (YSGH) form a phosphatase sequence motif II region. Histidine 171 acts as the Proton donors in catalysis. The Cytoplasmic portion of the chain corresponds to 186-196 (LQARMKGDWAR). Residues 197 to 216 (LLRPTLQFGLVAVSIYVGLS) traverse the membrane as a helical segment. The segment at 216–227 (SRVSDYKHHWSD) is phosphatase sequence motif III. At 217–229 (RVSDYKHHWSDVL) the chain is on the extracellular side. The active-site Nucleophile is the histidine 223. A helical membrane pass occupies residues 230–250 (TGLIQGALVAIVVAVYVSDFF). Residues 251 to 285 (KERNSPFKERKEEDSHTTLHETPTTGNHYRNSHQP) are Cytoplasmic-facing. Residues 257 to 269 (FKERKEEDSHTTL) are compositionally biased toward basic and acidic residues. The interval 257-285 (FKERKEEDSHTTLHETPTTGNHYRNSHQP) is disordered. A compositionally biased stretch (polar residues) spans 270–285 (HETPTTGNHYRNSHQP).

This sequence belongs to the PA-phosphatase related phosphoesterase family. Forms functional homodimers and homooligomers that are not required for substrate recognition and catalytic activity. Can also form heterooligomers with PLPP2 and PLPP3. N-glycosylated. N-linked sugars are of the complex type. N-glycosylation is not required for the phosphatase activity.

Its subcellular location is the cell membrane. It localises to the apical cell membrane. It is found in the membrane raft. The protein localises to the membrane. The protein resides in the caveola. It catalyses the reaction a 1,2-diacyl-sn-glycero-3-phosphate + H2O = a 1,2-diacyl-sn-glycerol + phosphate. It carries out the reaction 1,2-dihexadecanoyl-sn-glycero-3-phosphate + H2O = 1,2-dihexadecanoyl-sn-glycerol + phosphate. The catalysed reaction is 1,2-di-(9Z-octadecenoyl)-sn-glycero-3-phosphate + H2O = 1,2-di-(9Z-octadecenoyl)-sn-glycerol + phosphate. The enzyme catalyses a monoacyl-sn-glycero-3-phosphate + H2O = a monoacylglycerol + phosphate. It catalyses the reaction (9Z)-octadecenoyl-sn-glycero-3-phosphate + H2O = (9Z-octadecenoyl)-glycerol + phosphate. It carries out the reaction a 1-acyl-sn-glycero-3-phosphate + H2O = a 1-acyl-sn-glycerol + phosphate. The catalysed reaction is 1-(9Z-octadecenoyl)-sn-glycero-3-phosphate + H2O = 1-(9Z-octadecenoyl)-sn-glycerol + phosphate. The enzyme catalyses a 1,2-diacyl-sn-glycerol 3-diphosphate + H2O = a 1,2-diacyl-sn-glycero-3-phosphate + phosphate + H(+). It catalyses the reaction sphing-4-enine 1-phosphate + H2O = sphing-4-enine + phosphate. It carries out the reaction an N-acylsphing-4-enine 1-phosphate + H2O = an N-acylsphing-4-enine + phosphate. The catalysed reaction is N-(octanoyl)-sphing-4-enine-1-phosphate + H2O = N-octanoylsphing-4-enine + phosphate. The enzyme catalyses N-(9Z-octadecenoyl)-ethanolamine phosphate + H2O = N-(9Z-octadecenoyl) ethanolamine + phosphate. It catalyses the reaction 1-hexadecanoyl-2-(9Z-octadecenoyl)-sn-glycero-3-phosphate + H2O = 1-hexadecanoyl-2-(9Z-octadecenoyl)-sn-glycerol + phosphate. It participates in lipid metabolism; phospholipid metabolism. Its activity is regulated as follows. Magnesium-independent phospholipid phosphatase. Insensitive to N-ethylmaleimide. Its function is as follows. Magnesium-independent phospholipid phosphatase of the plasma membrane that catalyzes the dephosphorylation of a variety of glycerolipid and sphingolipid phosphate esters including phosphatidate/PA, lysophosphatidate/LPA, diacylglycerol pyrophosphate/DGPP, sphingosine 1-phosphate/S1P and ceramide 1-phosphate/C1P. Also acts on N-oleoyl ethanolamine phosphate/N-(9Z-octadecenoyl)-ethanolamine phosphate, a potential physiological compound. Through its extracellular phosphatase activity allows both the hydrolysis and the cellular uptake of these bioactive lipid mediators from the milieu, regulating signal transduction in different cellular processes. It is for instance essential for the extracellular hydrolysis of S1P and subsequent conversion into intracellular S1P. Involved in the regulation of inflammation, platelets activation, cell proliferation and migration among other processes. May also have an intracellular activity to regulate phospholipid-mediated signaling pathways. The chain is Phospholipid phosphatase 1 from Sus scrofa (Pig).